Reading from the N-terminus, the 500-residue chain is Probable malate:quinone oxidoreductase (500 aa).

Belongs to the MQO family. It depends on FAD as a cofactor.

The enzyme catalyses (S)-malate + a quinone = a quinol + oxaloacetate. Its pathway is carbohydrate metabolism; tricarboxylic acid cycle; oxaloacetate from (S)-malate (quinone route): step 1/1. In Bacillus thuringiensis (strain Al Hakam), this protein is Probable malate:quinone oxidoreductase.